We begin with the raw amino-acid sequence, 261 residues long: Small ribosomal subunit protein eS1 (261 aa).

A compositionally biased stretch (basic residues) spans 1–18 (MAVGKNKRISKGKKGGKK). Positions 1–22 (MAVGKNKRISKGKKGGKKKAAD) are disordered.

It belongs to the eukaryotic ribosomal protein eS1 family. As to quaternary structure, component of the small ribosomal subunit. Mature ribosomes consist of a small (40S) and a large (60S) subunit. The 40S subunit contains about 33 different proteins and 1 molecule of RNA (18S). The 60S subunit contains about 49 different proteins and 3 molecules of RNA (25S, 5.8S and 5S).

The protein localises to the cytoplasm. This is Small ribosomal subunit protein eS1 from Cicer arietinum (Chickpea).